A 151-amino-acid polypeptide reads, in one-letter code: Large ribosomal subunit protein bL9 (151 aa).

It belongs to the bacterial ribosomal protein bL9 family.

Binds to the 23S rRNA. The protein is Large ribosomal subunit protein bL9 of Nitrosococcus oceani (strain ATCC 19707 / BCRC 17464 / JCM 30415 / NCIMB 11848 / C-107).